The primary structure comprises 168 residues: MLVYQDLLTGDELLSDSFPYKEIQNGMLWEVQGKWVVQGAVDVNIGANPSAEGGGEDEGVDDQAVKVVDIVDTFRLQEQPAFDKKQFVTYIKRYIKNLTPKLEGEAQEAFKKNIESATKFLLSKLKDFQFFVGEGMHDDSALVFAYYKDGSADPTFLYLAPGLKEIKC.

One can recognise a TCTP domain in the interval 1-168; sequence MLVYQDLLTG…LAPGLKEIKC (168 aa).

Belongs to the TCTP family.

The protein resides in the cytoplasm. Involved in calcium binding and microtubule stabilization. The protein is Translationally-controlled tumor protein homolog (TCTP) of Solanum tuberosum (Potato).